The following is a 606-amino-acid chain: Probable potassium transport system protein Kup 2 (606 aa).

Transmembrane regions (helical) follow at residues 18–38, 46–66, 97–117, 140–160, 169–189, 204–224, 247–267, 286–306, 339–359, 368–388, 395–415, and 418–438; these read GLVF…IMTL, VLGI…VEYA, VAFV…DGII, AQGV…IFQF, AFGP…IVSI, AVTF…EVIL, AWYF…AFIL, ILYI…SQAL, IYIG…MLIF, AYGL…TMIF, WKVP…TANF, and LPHG…IMII.

The protein belongs to the HAK/KUP transporter (TC 2.A.72) family.

The protein localises to the cell inner membrane. The enzyme catalyses K(+)(in) + H(+)(in) = K(+)(out) + H(+)(out). Its function is as follows. Transport of potassium into the cell. Likely operates as a K(+):H(+) symporter. This is Probable potassium transport system protein Kup 2 from Geobacter metallireducens (strain ATCC 53774 / DSM 7210 / GS-15).